The following is a 1297-amino-acid chain: Phosphoribosylformylglycinamidine synthase (1297 aa).

ATP contacts are provided by residues Gly307–Asp318 and Ala678. Mg(2+) is bound by residues Glu718, Asn722, and Asp886. The Glutamine amidotransferase type-1 domain maps to Met1044–Ala1297. Cys1137 (nucleophile) is an active-site residue. Residues His1262 and Glu1264 contribute to the active site.

It in the N-terminal section; belongs to the FGAMS family. As to quaternary structure, monomer.

It localises to the cytoplasm. The enzyme catalyses N(2)-formyl-N(1)-(5-phospho-beta-D-ribosyl)glycinamide + L-glutamine + ATP + H2O = 2-formamido-N(1)-(5-O-phospho-beta-D-ribosyl)acetamidine + L-glutamate + ADP + phosphate + H(+). The protein operates within purine metabolism; IMP biosynthesis via de novo pathway; 5-amino-1-(5-phospho-D-ribosyl)imidazole from N(2)-formyl-N(1)-(5-phospho-D-ribosyl)glycinamide: step 1/2. In terms of biological role, phosphoribosylformylglycinamidine synthase involved in the purines biosynthetic pathway. Catalyzes the ATP-dependent conversion of formylglycinamide ribonucleotide (FGAR) and glutamine to yield formylglycinamidine ribonucleotide (FGAM) and glutamate. The protein is Phosphoribosylformylglycinamidine synthase of Vibrio vulnificus (strain YJ016).